A 161-amino-acid polypeptide reads, in one-letter code: Cyclin-dependent protein kinase inhibitor SMR12 (161 aa).

Positions 84-93 (EEEEVVEEEN) are enriched in acidic residues. Residues 84-106 (EEEEVVEEENDGFKTPTRPENRI) are disordered.

Functionally, probable cyclin-dependent protein kinase (CDK) inhibitor that functions as a repressor of mitosis in the endoreduplication cell cycle. In Arabidopsis thaliana (Mouse-ear cress), this protein is Cyclin-dependent protein kinase inhibitor SMR12.